We begin with the raw amino-acid sequence, 418 residues long: Putative ion-transport protein YfeO (418 aa).

The next 12 helical transmembrane spans lie at 10-30, 54-74, 99-119, 120-140, 149-169, 186-206, 223-243, 258-278, 300-320, 322-342, 343-363, and 371-391; these read LLLS…LIVV, DSPL…GLVI, ALPG…SLGP, EHPI…RLLP, ILAS…AALI, LFAP…FFHP, ILSG…AVWC, VLVL…GGPV, DYFL…ASGF, GGRI…LHEH, VPAV…VLVV, and LFMA…CIVM.

Belongs to the chloride channel (TC 2.A.49) family.

It localises to the cell membrane. The chain is Putative ion-transport protein YfeO from Escherichia coli O139:H28 (strain E24377A / ETEC).